The primary structure comprises 193 residues: Activity-regulated cytoskeleton associated protein 2 (193 aa).

The protein belongs to the ARC/ARG3.1 family. As to quaternary structure, homooligomer; homooligomerizes into virion-like capsids.

Its subcellular location is the extracellular vesicle membrane. Self-assembles into virion-like capsids that encapsulate RNAs and mediate intercellular RNA transfer. Arc2 protein is released from cells in extracellular vesicles that mediate the transfer of mRNA into neighboring cells. This Drosophila melanogaster (Fruit fly) protein is Activity-regulated cytoskeleton associated protein 2.